The chain runs to 131 residues: UPF0102 protein YraN (131 aa).

Residues 1–20 are disordered; sequence MATVPTRSGSPRQLTTKQTG.

The protein belongs to the UPF0102 family.

The sequence is that of UPF0102 protein YraN from Escherichia coli O139:H28 (strain E24377A / ETEC).